The chain runs to 646 residues: Preterminal protein (646 aa).

The Nuclear localization signal signature appears at 357–366 (RLPVRRRRRR). Residue serine 555 is modified to O-(5'-phospho-DNA)-serine. The interval 619–646 (LHADVPLPPLQANPHPPLPPDARPQRTM) is disordered. The span at 624–640 (PLPPLQANPHPPLPPDA) shows a compositional bias: pro residues.

The protein belongs to the adenoviridae terminal protein family. In terms of assembly, heterodimer with the polymerase; this heterodimer binds to bp 9 to 18 of the genome. Interacts with host POU2F1; POU2F1 binds to the auxiliary sequences in the inverted terminal repeats and tethers the pTP-POL heterodimer to the origin DNA thereby participating in the assembly of the pre-initiation complex (POL-TP-DBP-NFIA-POU2F1). Post-translationally, preterminal protein is used to replicate viral genome, upon genomic encapsidation it is processed first into iTP and finally into TP by adenovirus protease.

The protein localises to the host nucleus matrix. Functionally, protein covalently bound to the viral DNA that acts as a primer for viral genomic replication by DNA strand displacement. Assembles on the viral origin of replication in an initiation complex with viral polymerase, DBP, host NFIA and host POU2F1/OCT1. During initiation, the polymerase covalently couples the first dCTP with Ser-580 of pTP. The terminal protein stimulates the template activity over 20 fold compared to protein-free templates. Neo-synthesized viral genomes are linked to two preterminal proteins, one for each 5' end. These new genomes are encapsidated in the nucleus, and during capsid maturation by viral protease, preterminal protein is first cleaved into intermediary (iTP), then into mature TP. May play a role in host nuclear matrix localization of genomic DNA. The chain is Preterminal protein from Homo sapiens (Human).